We begin with the raw amino-acid sequence, 169 residues long: Pyrophosphate-energized proton pump 1 (169 aa).

The next 3 membrane-spanning stretches (helical) occupy residues 45 to 65 (YVVA…GIAM), 114 to 134 (VIPS…VLLI), and 141 to 161 (AFAA…LVAI).

Belongs to the H(+)-translocating pyrophosphatase (TC 3.A.10) family. In terms of assembly, homodimer. The cofactor is Mg(2+).

It localises to the cell inner membrane. It carries out the reaction diphosphate + H2O + H(+)(in) = 2 phosphate + 2 H(+)(out). Proton pump that utilizes the energy of pyrophosphate hydrolysis as the driving force for proton movement across the membrane. Generates a proton motive force. This Rhizobium leguminosarum bv. trifolii protein is Pyrophosphate-energized proton pump 1 (hppA1).